A 140-amino-acid chain; its full sequence is Nucleoside diphosphate kinase (140 aa).

Residues Lys11, Phe59, Arg87, Thr93, Arg104, and Asn114 each contribute to the ATP site. The active-site Pros-phosphohistidine intermediate is the His117.

Belongs to the NDK family. Homotetramer. Mg(2+) serves as cofactor.

It localises to the cytoplasm. The catalysed reaction is a 2'-deoxyribonucleoside 5'-diphosphate + ATP = a 2'-deoxyribonucleoside 5'-triphosphate + ADP. It catalyses the reaction a ribonucleoside 5'-diphosphate + ATP = a ribonucleoside 5'-triphosphate + ADP. Functionally, major role in the synthesis of nucleoside triphosphates other than ATP. The ATP gamma phosphate is transferred to the NDP beta phosphate via a ping-pong mechanism, using a phosphorylated active-site intermediate. In Rhodovulum sulfidophilum (Rhodobacter sulfidophilus), this protein is Nucleoside diphosphate kinase.